Consider the following 202-residue polypeptide: MSGRSVRAETRSRAKDDIKKVMAAIEKVRKWEKKWVTVGDTSLRIFKWVPVTDSKEKEKSKSNSSAAREPNGFPSDASANSSLLLEFQDENSNQSSVSDVYQLKVDSSTNSSPSPQQSESLSPAHTSDFRTDDSQPPTLGQEILEEPSLPASEVADEPPTLTKEEPVPLETQIAEEEEDSSAPPLKRFCMDQPAVPQTASES.

Residues 53 to 202 form a disordered region; the sequence is DSKEKEKSKS…PAVPQTASES (150 aa). Over residues 90–99 the composition is skewed to polar residues; the sequence is ENSNQSSVSD. Residues 107-123 are compositionally biased toward low complexity; that stretch reads SSTNSSPSPQQSESLSP. Ser114, Ser118, Ser120, Ser122, Ser127, Ser148, and Ser152 each carry phosphoserine.

This sequence belongs to the BCL7 family.

Its function is as follows. Positive regulator of apoptosis. Plays a role in the Wnt signaling pathway, negatively regulating the expression of Wnt signaling components CTNNB1 and HMGA1. Involved in cell cycle progression, maintenance of the nuclear structure and stem cell differentiation. May play a role in lung tumor development or progression. In Bos taurus (Bovine), this protein is B-cell CLL/lymphoma 7 protein family member B (BCL7B).